The chain runs to 148 residues: DNA-directed RNA polymerase II subunit GRINL1A, isoforms 4/5 (148 aa).

The interval 1-66 (MATPARAPES…AEFGGAAGNV (66 aa)) is disordered. The span at 53 to 66 (GLGAAEFGGAAGNV) shows a compositional bias: low complexity.

The protein is DNA-directed RNA polymerase II subunit GRINL1A, isoforms 4/5 (POLR2M) of Homo sapiens (Human).